The following is a 717-amino-acid chain: Delta-1-pyrroline-5-carboxylate synthase (717 aa).

The tract at residues 1-296 is glutamate 5-kinase; it reads MDAVDSTRAF…WAPVGDVGAR (296 aa). Substrate contacts are provided by serine 60, aspartate 157, and asparagine 176. ATP contacts are provided by residues 196–197 and 236–242; these read SD and RGGMTAK. The gamma-glutamyl phosphate reductase stretch occupies residues 297–717; it reads DMAVAARESS…YTHKDLTSHA (421 aa).

This sequence in the N-terminal section; belongs to the glutamate 5-kinase family. The protein in the C-terminal section; belongs to the gamma-glutamyl phosphate reductase family. In terms of tissue distribution, expressed at high levels in leaves and is inducible in roots subjected to salt stress.

It carries out the reaction L-glutamate + ATP = L-glutamyl 5-phosphate + ADP. The enzyme catalyses L-glutamate 5-semialdehyde + phosphate + NADP(+) = L-glutamyl 5-phosphate + NADPH + H(+). Its pathway is amino-acid biosynthesis; L-proline biosynthesis; L-glutamate 5-semialdehyde from L-glutamate: step 1/2. The protein operates within amino-acid biosynthesis; L-proline biosynthesis; L-glutamate 5-semialdehyde from L-glutamate: step 2/2. Its activity is regulated as follows. Feedback regulated by proline. In terms of biological role, P5CS plays a key role in proline biosynthesis, leading to osmoregulation in plants. In Actinidia deliciosa (Kiwi), this protein is Delta-1-pyrroline-5-carboxylate synthase.